The chain runs to 692 residues: Follicle-stimulating hormone receptor (692 aa).

Positions 1 to 17 (MALLLVSLLAFLGTGSG) are cleaved as a signal peptide. Intrachain disulfides connect cysteine 18/cysteine 25 and cysteine 23/cysteine 32. Residues 18–46 (CHHWLCHCSNRVFLCQDSKVTEIPTDLPR) form the LRRNT domain. Topologically, residues 18–365 (CHHWLCHCSN…EDIMGYNILR (348 aa)) are extracellular. LRR repeat units lie at residues 49 to 72 (IELRFVLTKLRVIPKGSFAGFGDL), 73 to 97 (EKIEISQNDVLEVIEADVFSNLPKL), 98 to 118 (HEIRIEKANNLLYINPEAFQN), 119 to 143 (LPSLRYLLISNTGIKHLPAVHKIQS), 144 to 169 (LQKVLLDIQDNINIHIVARNSFMGLS), 170 to 192 (FESVILWLSKNGIEEIHNCAFNG), 193 to 216 (TQLDELNLSDNNNLEELPNDVFQG), 217 to 240 (ASGPVILDISRTKVHSLPNHGLEN), and 241 to 259 (LKKLRARSTYRLKKLPNLD). N-linked (GlcNAc...) asparagine glycans are attached at residues asparagine 191 and asparagine 199. 4 disulfides stabilise this stretch: cysteine 275–cysteine 345, cysteine 276–cysteine 292, cysteine 276–cysteine 355, and cysteine 292–cysteine 337. Residue asparagine 293 is glycosylated (N-linked (GlcNAc...) asparagine). A Sulfotyrosine modification is found at tyrosine 334. The helical transmembrane segment at 366 to 386 (VLIWFISILAITGNTTVLVVL) threads the bilayer. The Cytoplasmic segment spans residues 387-397 (TTSQYKLTVPR). A helical transmembrane segment spans residues 398 to 420 (FLMCNLAFADLCIGIYLLLIASV). Topologically, residues 421–442 (DIHTKSQYHNYAIDWQTGAGCD) are extracellular. An intrachain disulfide couples cysteine 441 to cysteine 516. The chain crosses the membrane as a helical span at residues 443 to 464 (AAGFFTVFASELSVYTLTAITL). The Cytoplasmic portion of the chain corresponds to 465–484 (ERWHTITHAMQLECKVQLRH). The chain crosses the membrane as a helical span at residues 485-507 (AASVMVLGWTFAFAAALFPIFGI). Topologically, residues 508–527 (SSYMKVSICLPMDIDSPLSQ) are extracellular. The chain crosses the membrane as a helical span at residues 528 to 549 (LYVMALLVLNVLAFVVICGCYT). The Cytoplasmic segment spans residues 550-572 (HIYLTVRNPTIVSSSSDTKIAKR). The helical transmembrane segment at 573 to 596 (MATLIFTDFLCMAPISFFAISASL) threads the bilayer. Over 597 to 607 (KVPLITVSKAK) the chain is Extracellular. Residues 608-629 (ILLVLFYPINSCANPFLYAIFT) form a helical membrane-spanning segment. The Cytoplasmic portion of the chain corresponds to 630 to 692 (KNFRRDFFIL…LVPLNHSSQN (63 aa)).

This sequence belongs to the G-protein coupled receptor 1 family. FSH/LSH/TSH subfamily. As to quaternary structure, homotrimer. Functions as a homotrimer binding the FSH hormone heterodimer composed of CGA and FSHB. Interacts with ARRB2. Interacts with APPL2; interaction is independent of follicle stimulating hormone stimulation. Post-translationally, N-glycosylated; indirectly required for FSH-binding, possibly via a conformational change that allows high affinity binding of hormone. In terms of processing, sulfated. Sertoli cells and ovarian granulosa cells.

The protein resides in the cell membrane. G protein-coupled receptor for follitropin, the follicle-stimulating hormone. Through cAMP production activates the downstream PI3K-AKT and ERK1/ERK2 signaling pathways. The chain is Follicle-stimulating hormone receptor (Fshr) from Rattus norvegicus (Rat).